Reading from the N-terminus, the 101-residue chain is Chaperone modulatory protein CbpM (101 aa).

It belongs to the CbpM family.

Functionally, interacts with CbpA and inhibits both the DnaJ-like co-chaperone activity and the DNA binding activity of CbpA. Together with CbpA, modulates the activity of the DnaK chaperone system. Does not inhibit the co-chaperone activity of DnaJ. The sequence is that of Chaperone modulatory protein CbpM from Pseudomonas putida (strain ATCC 47054 / DSM 6125 / CFBP 8728 / NCIMB 11950 / KT2440).